A 212-amino-acid chain; its full sequence is FMN-dependent NADH:quinone oxidoreductase (212 aa).

FMN is bound by residues Ser10, 16-18 (SFS), and 98-101 (MWNF).

The protein belongs to the azoreductase type 1 family. As to quaternary structure, homodimer. Requires FMN as cofactor.

The catalysed reaction is 2 a quinone + NADH + H(+) = 2 a 1,4-benzosemiquinone + NAD(+). It catalyses the reaction N,N-dimethyl-1,4-phenylenediamine + anthranilate + 2 NAD(+) = 2-(4-dimethylaminophenyl)diazenylbenzoate + 2 NADH + 2 H(+). Its function is as follows. Quinone reductase that provides resistance to thiol-specific stress caused by electrophilic quinones. Functionally, also exhibits azoreductase activity. Catalyzes the reductive cleavage of the azo bond in aromatic azo compounds to the corresponding amines. This Desulfotalea psychrophila (strain LSv54 / DSM 12343) protein is FMN-dependent NADH:quinone oxidoreductase.